The sequence spans 860 residues: Leucine--tRNA ligase (860 aa).

The 'HIGH' region signature appears at 42–52 (PYPSGRLHMGH). The 'KMSKS' region signature appears at 619-623 (KMSKS). Position 622 (K622) interacts with ATP.

This sequence belongs to the class-I aminoacyl-tRNA synthetase family.

Its subcellular location is the cytoplasm. It carries out the reaction tRNA(Leu) + L-leucine + ATP = L-leucyl-tRNA(Leu) + AMP + diphosphate. The polypeptide is Leucine--tRNA ligase (Escherichia coli O45:K1 (strain S88 / ExPEC)).